The sequence spans 228 residues: 2-C-methyl-D-erythritol 4-phosphate cytidylyltransferase (228 aa).

It belongs to the IspD/TarI cytidylyltransferase family. IspD subfamily.

It catalyses the reaction 2-C-methyl-D-erythritol 4-phosphate + CTP + H(+) = 4-CDP-2-C-methyl-D-erythritol + diphosphate. It functions in the pathway isoprenoid biosynthesis; isopentenyl diphosphate biosynthesis via DXP pathway; isopentenyl diphosphate from 1-deoxy-D-xylulose 5-phosphate: step 2/6. Its function is as follows. Catalyzes the formation of 4-diphosphocytidyl-2-C-methyl-D-erythritol from CTP and 2-C-methyl-D-erythritol 4-phosphate (MEP). This Halalkalibacterium halodurans (strain ATCC BAA-125 / DSM 18197 / FERM 7344 / JCM 9153 / C-125) (Bacillus halodurans) protein is 2-C-methyl-D-erythritol 4-phosphate cytidylyltransferase.